Reading from the N-terminus, the 373-residue chain is Dual-specificity RNA methyltransferase RlmN (373 aa).

The active-site Proton acceptor is the glutamate 91. Residues 97–339 form the Radical SAM core domain; the sequence is EDDRGTLCIS…TTVRKTRGDD (243 aa). Residues cysteine 104 and cysteine 344 are joined by a disulfide bond. The [4Fe-4S] cluster site is built by cysteine 111, cysteine 115, and cysteine 118. S-adenosyl-L-methionine is bound by residues 165 to 166, serine 197, 219 to 221, and asparagine 301; these read GE and SLH. Cysteine 344 (S-methylcysteine intermediate) is an active-site residue.

It belongs to the radical SAM superfamily. RlmN family. Requires [4Fe-4S] cluster as cofactor.

It is found in the cytoplasm. It carries out the reaction adenosine(2503) in 23S rRNA + 2 reduced [2Fe-2S]-[ferredoxin] + 2 S-adenosyl-L-methionine = 2-methyladenosine(2503) in 23S rRNA + 5'-deoxyadenosine + L-methionine + 2 oxidized [2Fe-2S]-[ferredoxin] + S-adenosyl-L-homocysteine. It catalyses the reaction adenosine(37) in tRNA + 2 reduced [2Fe-2S]-[ferredoxin] + 2 S-adenosyl-L-methionine = 2-methyladenosine(37) in tRNA + 5'-deoxyadenosine + L-methionine + 2 oxidized [2Fe-2S]-[ferredoxin] + S-adenosyl-L-homocysteine. Functionally, specifically methylates position 2 of adenine 2503 in 23S rRNA and position 2 of adenine 37 in tRNAs. m2A2503 modification seems to play a crucial role in the proofreading step occurring at the peptidyl transferase center and thus would serve to optimize ribosomal fidelity. This is Dual-specificity RNA methyltransferase RlmN from Paracidovorax citrulli (strain AAC00-1) (Acidovorax citrulli).